The following is a 394-amino-acid chain: Elongation factor Tu 1 (394 aa).

A tr-type G domain is found at lysine 10–glutamate 204. Positions glycine 19–threonine 26 are G1. Glycine 19–threonine 26 serves as a coordination point for GTP. A Mg(2+)-binding site is contributed by threonine 26. Residues glycine 60–asparagine 64 form a G2 region. The interval aspartate 81–glycine 84 is G3. GTP-binding positions include aspartate 81 to histidine 85 and asparagine 136 to aspartate 139. Residues asparagine 136–aspartate 139 form a G4 region. The tract at residues serine 174–leucine 176 is G5.

It belongs to the TRAFAC class translation factor GTPase superfamily. Classic translation factor GTPase family. EF-Tu/EF-1A subfamily. Monomer.

Its subcellular location is the cytoplasm. It carries out the reaction GTP + H2O = GDP + phosphate + H(+). In terms of biological role, GTP hydrolase that promotes the GTP-dependent binding of aminoacyl-tRNA to the A-site of ribosomes during protein biosynthesis. The sequence is that of Elongation factor Tu 1 from Yersinia pestis bv. Antiqua (strain Nepal516).